The chain runs to 763 residues: MGKRRSRGRSQLLSTMTKKQKKHLRDFGEEHPFYDRVSKKEVKPQICQLSESSDSSHSESESESEQEHVSGYHRLLATLKNISEEEEEEEEEEEEEEEDKEEVDDSAVGDSEMNGEDGGEDVRVEETAESSETQDHMSLADNSKGKDGEEPPGVSQKSSEEFTDVKHESLFSLETNFLEEESGGSYSQRTSQDPFQHHINKELQEKEIQAAASSPAATQQLKWPVLGHLVFSSKFQKMETFKPPKDIDLKSLHLQKPLESTWAKTNSQFLSGPGPQKSSSCFTPLQKELFLIMNSYRDLFYPERTALKNGEEVRHVYCLHAINHVLKANAQVLANNSRRRTQKLGVGDDDDFRDQGLTRPKVLIVVPFREAALRVVQLFISLLEGDSKKKIIVSNKKRFQGEYGSDPEERPPNLKRPEDYEAVFVGNIDDHFRIGVAILQRSIRLYAPFYSSDILIASPLGLRTIIGGEGEKKRDFDFLSSIELLIIDQADIYLMQNWEHVLHLMNHMNLLPLDSHGVNFSRVRMWSLNNWSKYYRQTLLFGALQDAQINSVFNKHCVNAQGQVAVRNVPMTGSISHVLVQLPHVFQRMEAQDLASVIDARFHFFINKILPQYRDAVMSHTLIYVPSYFDFVRLRNYFKKEELNFTHICEYTQRSGVSRARHFFLQGEKQFLLLTERFHFYKRYTIKGIRNLIFYELPTYAHFYSEVCNMLRATSRGEEATWTCTVLYSKYDAQRLAAVVGVERAAQMLQSPKSVHLFITGEK.

The disordered stretch occupies residues 1-164; it reads MGKRRSRGRS…SQKSSEEFTD (164 aa). Promotes p53/TP53 degradation regions lie at residues 1-190 and 580-642; these read MGKR…SQRT and VQLP…KKEE. Serine 10 is subject to Phosphoserine. Over residues 25–43 the composition is skewed to basic and acidic residues; the sequence is RDFGEEHPFYDRVSKKEVK. A phosphoserine mark is found at serine 52, serine 60, and serine 64. Residues 54 to 70 show a composition bias toward basic and acidic residues; sequence DSSHSESESESEQEHVS. Acidic residues predominate over residues 84–119; the sequence is EEEEEEEEEEEEEEEDKEEVDDSAVGDSEMNGEDGG. A represses p53/TP53 degradation region spans residues 643 to 704; the sequence is LNFTHICEYT…YELPTYAHFY (62 aa).

This sequence belongs to the UTP25 family. As to quaternary structure, interacts with CAPN3; the interaction is required for CAPN3 translocation to the nucleolus. Post-translationally, phosphorylated. Phosphorylation is required to promote p53/TP53 degradation in the nucleolus which promotes cell cycle progression and liver development.

It localises to the nucleus. Its subcellular location is the nucleolus. In terms of biological role, component of the ribosomal small subunit processome for the biogenesis of ribosomes, functions in pre-ribosomal RNA (pre-rRNA) processing. Essential for embryonic development in part through the regulation of p53 pathway. Controls the expansion growth of digestive organs and liver. Also involved in the sympathetic neuronal development. Mediates, with CAPN3, the proteasome-independent degradation of p53/TP53. The protein is U3 small nucleolar RNA-associated protein 25 homolog of Rattus norvegicus (Rat).